Here is a 389-residue protein sequence, read N- to C-terminus: Lipid-A-disaccharide synthase (389 aa).

This sequence belongs to the LpxB family.

It catalyses the reaction a lipid X + a UDP-2-N,3-O-bis[(3R)-3-hydroxyacyl]-alpha-D-glucosamine = a lipid A disaccharide + UDP + H(+). The protein operates within bacterial outer membrane biogenesis; LPS lipid A biosynthesis. Functionally, condensation of UDP-2,3-diacylglucosamine and 2,3-diacylglucosamine-1-phosphate to form lipid A disaccharide, a precursor of lipid A, a phosphorylated glycolipid that anchors the lipopolysaccharide to the outer membrane of the cell. The chain is Lipid-A-disaccharide synthase from Burkholderia orbicola (strain MC0-3).